The sequence spans 130 residues: MNSLSLPHRYPFLFIDGVTDSEPGKHAAAYKLISENDWFITDTQTEMPFSLVIEALAQTAAFTGITDENSLGLLSSVKKAEKLGEAVPGDRLDLTFEVTRNRRGFVFGHAKASVGEQPVAEAEIGIYIEK.

Belongs to the thioester dehydratase family. FabZ subfamily.

This is an uncharacterized protein from Bacillus subtilis (strain 168).